A 100-amino-acid chain; its full sequence is Large ribosomal subunit protein eL30 (100 aa).

Belongs to the eukaryotic ribosomal protein eL30 family.

This is Large ribosomal subunit protein eL30 from Methanococcus maripaludis (strain DSM 14266 / JCM 13030 / NBRC 101832 / S2 / LL).